The following is a 173-amino-acid chain: NADH-ubiquinone oxidoreductase chain 6 (173 aa).

A run of 5 helical transmembrane segments spans residues 1-21 (MTYF…AVAS), 25-45 (PYFA…VLVG), 53-73 (LVLF…SAAL), 87-107 (VLGY…FFWG), and 141-161 (GGML…VLEL).

Belongs to the complex I subunit 6 family.

The protein localises to the mitochondrion membrane. It carries out the reaction a ubiquinone + NADH + 5 H(+)(in) = a ubiquinol + NAD(+) + 4 H(+)(out). In terms of biological role, core subunit of the mitochondrial membrane respiratory chain NADH dehydrogenase (Complex I) that is believed to belong to the minimal assembly required for catalysis. Complex I functions in the transfer of electrons from NADH to the respiratory chain. The immediate electron acceptor for the enzyme is believed to be ubiquinone. This is NADH-ubiquinone oxidoreductase chain 6 (MT-ND6) from Carassius auratus (Goldfish).